The following is a 427-amino-acid chain: UPF0597 protein CPF_0803 (427 aa).

It belongs to the UPF0597 family.

The protein is UPF0597 protein CPF_0803 of Clostridium perfringens (strain ATCC 13124 / DSM 756 / JCM 1290 / NCIMB 6125 / NCTC 8237 / Type A).